The following is a 97-amino-acid chain: MSRACELTGKSVQYGNNVSHANNRTRCRFLPNLCNVTLISETLGQSYRLRISANALRSVEHRGGLDAFLVKSDDKELSQRARLLKRQIAKKQAEAAA.

It belongs to the bacterial ribosomal protein bL28 family.

This chain is Large ribosomal subunit protein bL28, found in Brucella ovis (strain ATCC 25840 / 63/290 / NCTC 10512).